Consider the following 478-residue polypeptide: ATP-dependent RNA helicase DDX19A (478 aa).

An N-acetylalanine modification is found at alanine 2. Positions 2–299 (ATDSWALAVD…DPNIIKLKRE (298 aa)) are N-terminal lobe. Lysine 26 is covalently cross-linked (Glycyl lysine isopeptide (Lys-Gly) (interchain with G-Cter in SUMO1); alternate). A Glycyl lysine isopeptide (Lys-Gly) (interchain with G-Cter in SUMO2); alternate cross-link involves residue lysine 26. The segment at 34–53 (TNGVIKTSTTAEKTEEEEKE) is disordered. Phosphothreonine is present on threonine 42. An N-terminal helix region spans residues 54–67 (DRAAQSLLNKLIRS). The short motif at 91–119 (KSFEELRLKPQLLQGVYAMGFNRPSKIQE) is the Q motif element. ATP is bound by residues glutamine 118 and 137–144 (SQSGTGKT). In terms of domain architecture, Helicase ATP-binding spans 124–294 (MMLAEPPQNL…QKVVPDPNII (171 aa)). The short motif at 241–244 (DEAD) is the DEAD box element. Residues 300–478 (EETLDTIKQY…DLDEIEKIAN (179 aa)) form a C-terminal lobe region. One can recognise a Helicase C-terminal domain in the interval 305–473 (TIKQYYVLCN…RLDTDDLDEI (169 aa)). The ATP site is built by arginine 428 and arginine 431.

This sequence belongs to the DEAD box helicase family. DDX19/DBP5 subfamily. In terms of tissue distribution, found in testis, heart, brain, liver, skeletal muscle, and kidney.

The protein resides in the cytoplasm. Its subcellular location is the nucleus. It localises to the nucleoplasm. It catalyses the reaction ATP + H2O = ADP + phosphate + H(+). ATP-dependent RNA helicase involved in mRNA export from the nucleus. Rather than unwinding RNA duplexes, DDX19 functions as a remodeler of ribonucleoprotein particles, whereby proteins bound to nuclear mRNA are dissociated and replaced by cytoplasmic mRNA binding proteins. This Mus musculus (Mouse) protein is ATP-dependent RNA helicase DDX19A (Ddx19a).